Consider the following 136-residue polypeptide: Flagellar assembly factor FliW 2 (136 aa).

It belongs to the FliW family. Interacts with translational regulator CsrA and flagellin(s).

It localises to the cytoplasm. In terms of biological role, acts as an anti-CsrA protein, binds CsrA and prevents it from repressing translation of its target genes, one of which is flagellin. Binds to flagellin and participates in the assembly of the flagellum. The sequence is that of Flagellar assembly factor FliW 2 from Wolinella succinogenes (strain ATCC 29543 / DSM 1740 / CCUG 13145 / JCM 31913 / LMG 7466 / NCTC 11488 / FDC 602W) (Vibrio succinogenes).